A 103-amino-acid polypeptide reads, in one-letter code: Enhancer of rudimentary homolog (103 aa).

This sequence belongs to the E(R) family. In terms of assembly, homodimer.

Functionally, may have a role in the cell cycle. This is Enhancer of rudimentary homolog from Aedes aegypti (Yellowfever mosquito).